A 545-amino-acid chain; its full sequence is uncharacterized protein (545 aa).

Basic and acidic residues-rich tracts occupy residues 34–44 and 53–63; these read PMNKQNEKLKT and PRNDYSRRVSR. 3 disordered regions span residues 34–98, 269–296, and 415–444; these read PMNK…PESN, QNGT…PQDS, and ERPQ…SAPE. Residues 69–78 are compositionally biased toward polar residues; it reads TDSSEQQITA. Basic and acidic residues predominate over residues 415–428; sequence ERPQRKTEHVKTPE. The segment covering 429 to 441 has biased composition (polar residues); it reads ENLQTKNPTTMTS.

This is an uncharacterized protein from Mus musculus (Mouse).